The sequence spans 48 residues: uncharacterized protein (48 aa).

This is an uncharacterized protein from Saccharomyces cerevisiae (strain ATCC 204508 / S288c) (Baker's yeast).